The following is a 340-amino-acid chain: MSELEQLRQEAEQLRNQIQDARKACNDATLVQITSNMDSVGRIQMRTRRTLRGHLAKIYAMHWGYDSRLLVSASQDGKLIIWDSYTTNKMHAIPLRSSWVMTCAYAPSGNYVACGGLDNICSIYNLKTREGNVRVSRELPGHTGYLSCCRFLDDSQIVTSSGDTTCALWDIETAQQTTTFTGHSGDVMSLSLSPDMRTFVSGACDASSKLWDIRDGMCRQSFTGHVSDINAVSFFPNGYAFATGSDDATCRLFDLRADQELLLYSHDNIICGITSVAFSKSGRLLLAGYDDFNCNVWDTLKGDRAGVLAGHDNRVSCLGVTDDGMAVATGSWDSFLRIWN.

Ser2 carries the N-acetylserine modification. At Ser2 the chain carries Phosphoserine. WD repeat units lie at residues 53-92, 95-134, 141-179, 182-221, and 224-263; these read GHLAKIYAMHWGYDSRLLVSASQDGKLIIWDSYTTNKMHA, LRSSWVMTCAYAPSGNYVACGGLDNICSIYNLKTREGNVR, GHTGYLSCCRFLDDSQIVTSSGDTTCALWDIETAQQTTT, GHSGDVMSLSLSPDMRTFVSGACDASSKLWDIRDGMCRQS, and GHVSDINAVSFFPNGYAFATGSDDATCRLFDLRADQELLL. The residue at position 266 (His266) is a Phosphohistidine. WD repeat units lie at residues 268-307 and 310-339; these read NIICGITSVAFSKSGRLLLAGYDDFNCNVWDTLKGDRAGV and GHDNRVSCLGVTDDGMAVATGSWDSFLRIW.

Belongs to the WD repeat G protein beta family. In terms of assembly, g proteins are composed of 3 units, alpha, beta and gamma. As to expression, strongly expressed in lung and placenta, whereas it is weakly expressed in brain and heart. Abundantly expressed in the axons and Schwann cells of peripheral nerves.

Its function is as follows. Guanine nucleotide-binding proteins (G proteins) are involved as a modulator or transducer in various transmembrane signaling systems. The beta and gamma chains are required for the GTPase activity, for replacement of GDP by GTP, and for G protein-effector interaction. The chain is Guanine nucleotide-binding protein subunit beta-4 (GNB4) from Homo sapiens (Human).